Here is a 279-residue protein sequence, read N- to C-terminus: Protein K1 (279 aa).

Residues 1–18 (MFLYVVCSLAVCFRGLLS) form the signal peptide. Over 19–220 (LSLQSSPNLC…TYLYIQEHLL (202 aa)) the chain is Extracellular. Residues 221 to 241 (VFMTLVALIGTMCGILGTIIF) traverse the membrane as a helical segment. Residues 242-279 (AHCQKQRDSNKTVPQQLQDYYSLHDLCTEDYTQPVDWY) are Cytoplasmic-facing.

Homooligomer.

The protein resides in the host membrane. In terms of biological role, promotes host cell survival pathways and may contribute to pathogenesis by preventing infected cells from undergoing apoptosis. Acts in host B-cells by mimicking the activated B-cell receptor complex. The cytoplasmic tail of K1 can induce the phosphorylation of a number of different kinases, leading to the activation of survival signaling pathways. In Human herpesvirus 8 type P (isolate GK18) (HHV-8), this protein is Protein K1 (K1).